The sequence spans 685 residues: uncharacterized protein (685 aa).

2 disordered regions span residues 502–538 (NLNQ…SLNK) and 635–685 (RSKR…IHNA). Polar residues predominate over residues 518 to 538 (SSENMTKFPSSRGKSTVSLNK). The segment covering 675-685 (KLKKSLIIHNA) has biased composition (basic residues).

This is an uncharacterized protein from Homo sapiens (Human).